Reading from the N-terminus, the 436-residue chain is Phosphomethylpyrimidine synthase (436 aa).

Substrate is bound by residues asparagine 69, methionine 98, tyrosine 127, histidine 163, 185–187 (SRG), 226–229 (DACR), and glutamate 265. A Zn(2+)-binding site is contributed by histidine 269. Tyrosine 292 serves as a coordination point for substrate. Residue histidine 333 coordinates Zn(2+). [4Fe-4S] cluster is bound by residues cysteine 409, cysteine 412, and cysteine 416.

It belongs to the ThiC family. [4Fe-4S] cluster serves as cofactor.

The catalysed reaction is 5-amino-1-(5-phospho-beta-D-ribosyl)imidazole + S-adenosyl-L-methionine = 4-amino-2-methyl-5-(phosphooxymethyl)pyrimidine + CO + 5'-deoxyadenosine + formate + L-methionine + 3 H(+). It functions in the pathway cofactor biosynthesis; thiamine diphosphate biosynthesis. Its function is as follows. Catalyzes the synthesis of the hydroxymethylpyrimidine phosphate (HMP-P) moiety of thiamine from aminoimidazole ribotide (AIR) in a radical S-adenosyl-L-methionine (SAM)-dependent reaction. The chain is Phosphomethylpyrimidine synthase from Clostridium acetobutylicum (strain ATCC 824 / DSM 792 / JCM 1419 / IAM 19013 / LMG 5710 / NBRC 13948 / NRRL B-527 / VKM B-1787 / 2291 / W).